A 26-amino-acid chain; its full sequence is uncharacterized protein (26 aa).

Residues 3 to 23 form a helical membrane-spanning segment; sequence IIYLILFLIVIYLLYRILDVL.

The protein resides in the membrane. This is an uncharacterized protein from Helicobacter pylori (strain J99 / ATCC 700824) (Campylobacter pylori J99).